Consider the following 205-residue polypeptide: Inactive ribonuclease-like protein 9 (205 aa).

Residues 1–26 (MMRTLITIHPLPLLLLLQQLLQPVQF) form the signal peptide. Disulfide bonds link Cys-98-Cys-153, Cys-116-Cys-168, and Cys-123-Cys-130. N-linked (GlcNAc...) asparagine glycosylation is found at Asn-131 and Asn-143.

This sequence belongs to the pancreatic ribonuclease family.

The protein localises to the secreted. Functionally, does not exhibit any ribonuclease activity. The polypeptide is Inactive ribonuclease-like protein 9 (RNASE9) (Gorilla gorilla gorilla (Western lowland gorilla)).